Here is a 244-residue protein sequence, read N- to C-terminus: Uracil phosphoribosyltransferase (244 aa).

GTP contacts are provided by residues Lys-59, Arg-68, and 102-105; that span reads YSKI. Arg-112 contributes to the 5-phospho-alpha-D-ribose 1-diphosphate binding site. Residue Arg-129 participates in GTP binding. 5-phospho-alpha-D-ribose 1-diphosphate is bound at residue Arg-137. Arg-158 contacts GTP. 5-phospho-alpha-D-ribose 1-diphosphate is bound by residues Asp-164 and 164–172; that span reads DPMCATAGS. Residues Ile-229 and 234–236 contribute to the uracil site; that span reads GDF. Asp-235 is a 5-phospho-alpha-D-ribose 1-diphosphate binding site.

This sequence belongs to the UPRTase family. In terms of assembly, monomer. Forms homodimers in presence of substrates and homotetramers in the presence of GTP. Requires Mg(2+) as cofactor.

The enzyme catalyses UMP + diphosphate = 5-phospho-alpha-D-ribose 1-diphosphate + uracil. It participates in pyrimidine metabolism; UMP biosynthesis via salvage pathway; UMP from uracil: step 1/1. With respect to regulation, allosterically activated by GTP. Binding of GTP leads to 5-time activation of the enzyme. Catalyzes the conversion of uracil and 5-phospho-alpha-D-ribose 1-diphosphate (PRPP) to UMP and diphosphate. This Toxoplasma gondii protein is Uracil phosphoribosyltransferase (uprt).